A 68-amino-acid polypeptide reads, in one-letter code: KCNQ1 downstream neighbor protein (68 aa).

Residues 28–68 are disordered; it reads GVASGCSPSKASQEARGKEKCPTLNGQPQWSALFTLPPQRE.

Shows reduced expression in Wilms' tumor samples.

The protein is KCNQ1 downstream neighbor protein (KCNQ1DN) of Homo sapiens (Human).